A 117-amino-acid chain; its full sequence is uncharacterized protein (117 aa).

The first 20 residues, Met1–Ser20, serve as a signal peptide directing secretion.

This is an uncharacterized protein from Saccharomyces cerevisiae (strain ATCC 204508 / S288c) (Baker's yeast).